Reading from the N-terminus, the 351-residue chain is Ribosomal RNA small subunit methyltransferase H (351 aa).

S-adenosyl-L-methionine is bound by residues 48–50 (GGY), aspartate 67, phenylalanine 94, aspartate 115, and glutamine 122. Residues 298–351 (GPVLPSEAETEVNPRARSAKLRAGERTDGPAPPPLSAIETLASLPAPQGRGTRR) are disordered.

Belongs to the methyltransferase superfamily. RsmH family.

The protein resides in the cytoplasm. The catalysed reaction is cytidine(1402) in 16S rRNA + S-adenosyl-L-methionine = N(4)-methylcytidine(1402) in 16S rRNA + S-adenosyl-L-homocysteine + H(+). In terms of biological role, specifically methylates the N4 position of cytidine in position 1402 (C1402) of 16S rRNA. The polypeptide is Ribosomal RNA small subunit methyltransferase H (Methylorubrum populi (strain ATCC BAA-705 / NCIMB 13946 / BJ001) (Methylobacterium populi)).